The primary structure comprises 46 residues: Pape peptide (46 aa).

Residues 1–10 (KQLLKEALAP) show a composition bias toward low complexity. Residues 1 to 46 (KQLLKEALAPEPAPKPAPEPAPEPAPEPAPEAAPEPAAAAPEAAPE) form a disordered region. Residues 11–33 (EPAPKPAPEPAPEPAPEPAPEAA) show a composition bias toward pro residues. PAPE repeat units follow at residues 16–19 (PAPE), 20–23 (PAPE), 24–27 (PAPE), and 28–31 (PAPE). The segment covering 34–46 (PEPAAAAPEAAPE) has biased composition (low complexity).

In terms of tissue distribution, expressed by the venom gland.

The protein localises to the secreted. In Tityus stigmurus (Brazilian scorpion), this protein is Pape peptide.